We begin with the raw amino-acid sequence, 837 residues long: Translation initiation factor IF-2 (837 aa).

The disordered stretch occupies residues 94–252; that stretch reads QRSPEEIEAE…NAHGFQSPTG (159 aa). A compositionally biased stretch (basic and acidic residues) spans 96–136; that stretch reads SPEEIEAERKRELDERRAVENAARQKAEEEARVRAEEEARR. A compositionally biased stretch (low complexity) spans 137–171; sequence QPAAPSAPAEAVAAPAPVAEPVREAAPVVAAAPAA. Composition is skewed to basic and acidic residues over residues 172 to 213 and 221 to 230; these read DTRK…EKAP and TTDEESDGFR. Basic residues predominate over residues 231 to 244; the sequence is RGGRGKAKLKKRNA. Residues 337–506 enclose the tr-type G domain; sequence PRAPVVTVMG…LLQAEVLELT (170 aa). Residues 346-353 are G1; that stretch reads GHVDHGKT. 346–353 lines the GTP pocket; that stretch reads GHVDHGKT. The G2 stretch occupies residues 371 to 375; sequence GITQH. Residues 392–395 are G3; that stretch reads DTPG. GTP contacts are provided by residues 392–396 and 446–449; these read DTPGH and NKID. Residues 446 to 449 are G4; it reads NKID. Residues 482–484 form a G5 region; that stretch reads SAK.

Belongs to the TRAFAC class translation factor GTPase superfamily. Classic translation factor GTPase family. IF-2 subfamily.

The protein resides in the cytoplasm. In terms of biological role, one of the essential components for the initiation of protein synthesis. Protects formylmethionyl-tRNA from spontaneous hydrolysis and promotes its binding to the 30S ribosomal subunits. Also involved in the hydrolysis of GTP during the formation of the 70S ribosomal complex. The polypeptide is Translation initiation factor IF-2 (Pseudomonas fluorescens (strain Pf0-1)).